The chain runs to 112 residues: Mitochondrial import inner membrane translocase subunit TIM14-3 (112 aa).

N-acetylalanine is present on A2. The helical transmembrane segment at 6 to 28 (IAGAAVAAAAVAGRYGILAWQAF) threads the bilayer. One can recognise a J domain in the interval 53-112 (EAALILGVRESVVADKVKEAHRRVMVANHPDAGGSHYLASKINEAKDMMLGKSNNSGSAF).

This sequence belongs to the TIM14 family. Probable component of the PAM complex at least composed of a mitochondrial HSP70 protein, TIMM44 and TIMM14. The complex interacts with the TIMM23 component of the TIM17:23 complex.

It localises to the mitochondrion. It is found in the mitochondrion inner membrane. In terms of biological role, component of the PAM complex, a complex required for the translocation of transit peptide-containing proteins from the inner membrane into the mitochondrial matrix in an ATP-dependent manner. This chain is Mitochondrial import inner membrane translocase subunit TIM14-3 (TIM14-3), found in Arabidopsis thaliana (Mouse-ear cress).